A 644-amino-acid polypeptide reads, in one-letter code: Exoribonuclease 2 (644 aa).

The RNB domain occupies 189–516; sequence REDLTALDFV…NHRLLKAVIK (328 aa). The 83-residue stretch at 561 to 643 folds into the S1 motif domain; it reads DTRFAAEIVD…ETRSIIARPV (83 aa).

It belongs to the RNR ribonuclease family. RNase II subfamily.

It localises to the cytoplasm. It carries out the reaction Exonucleolytic cleavage in the 3'- to 5'-direction to yield nucleoside 5'-phosphates.. Involved in mRNA degradation. Hydrolyzes single-stranded polyribonucleotides processively in the 3' to 5' direction. This chain is Exoribonuclease 2, found in Escherichia coli O6:K15:H31 (strain 536 / UPEC).